Here is a 217-residue protein sequence, read N- to C-terminus: GTP-binding protein Rit2 (217 aa).

GTP contacts are provided by residues 27–34 (GAGGVGKS), 74–78 (DTAGQ), and 133–136 (NKID).

This sequence belongs to the small GTPase superfamily. Ras family. In terms of assembly, interacts with PLXNB3. Interacts with AFDN, the C-terminal domain of RALGDS and RLF, but not with RIN1 and PIK3CA. RLF binds exclusively to the active GTP-bound form. Binds calmodulin. Interacts with POU4F1 (via N-terminus); the interaction controls POU4F1 transactivation activity on some neuronal target genes. Expressed in ganglion cell layer (GCL), inner plexiform layer (IPL) and inner nuclear layer (INL) of the retina. Expressed in retinal ganglion cells (RGCs). Expressed in horizontal, bipolar and amacrine cells, but not Mueller glia, of the INL (at protein level). Neuron-specific. Expressed in ganglion cell layer (GCL) and inner plexiform layer (IPL).

The protein resides in the nucleus. It is found in the cell membrane. It catalyses the reaction GTP + H2O = GDP + phosphate + H(+). Its activity is regulated as follows. Alternates between an inactive form bound to GDP and an active form bound to GTP. Functionally, binds and exchanges GTP and GDP. Binds and modulates the activation of POU4F1 as gene expression regulator. In Mus musculus (Mouse), this protein is GTP-binding protein Rit2 (Rit2).